Consider the following 432-residue polypeptide: Adenylosuccinate synthetase (432 aa).

GTP-binding positions include 12–18 and 40–42; these read GDEGKGK and GHT. Catalysis depends on aspartate 13, which acts as the Proton acceptor. Mg(2+) contacts are provided by aspartate 13 and glycine 40. IMP-binding positions include 13-16, 38-41, threonine 132, arginine 146, glutamine 226, threonine 241, and arginine 305; these read DEGK and NAGH. Histidine 41 (proton donor) is an active-site residue. 301 to 307 lines the substrate pocket; sequence VVTGRKR. GTP is bound by residues arginine 307, 333-335, and 415-417; these read KLD and STS.

This sequence belongs to the adenylosuccinate synthetase family. Homodimer. It depends on Mg(2+) as a cofactor.

It localises to the cytoplasm. It catalyses the reaction IMP + L-aspartate + GTP = N(6)-(1,2-dicarboxyethyl)-AMP + GDP + phosphate + 2 H(+). It participates in purine metabolism; AMP biosynthesis via de novo pathway; AMP from IMP: step 1/2. Its function is as follows. Plays an important role in the de novo pathway of purine nucleotide biosynthesis. Catalyzes the first committed step in the biosynthesis of AMP from IMP. This chain is Adenylosuccinate synthetase, found in Rhizobium etli (strain CIAT 652).